A 536-amino-acid polypeptide reads, in one-letter code: GATA zinc finger domain-containing protein 9 (536 aa).

2 stretches are compositionally biased toward polar residues: residues 1 to 20 (MTSF…QPHS) and 36 to 55 (CQSS…NPNA). Disordered stretches follow at residues 1 to 77 (MTSF…LSGS), 183 to 211 (SSSL…VVRS), 237 to 258 (RSAF…GGGS), 273 to 342 (QLHY…GFVQ), and 370 to 423 (ALFS…NISS). A compositionally biased stretch (low complexity) spans 56–72 (TTNNTTTTTTTTTTTTN). The segment covering 188-206 (SEDDDCCYETEEDDNGEDG) has biased composition (acidic residues). Residues 237–247 (RSAFKKNKKDY) show a composition bias toward basic residues. The span at 273-283 (QLHYSNSMTDN) shows a compositional bias: polar residues. Composition is skewed to low complexity over residues 318–335 (SNSN…NNNN) and 379–399 (PSPT…NSGN). A GATA-type zinc finger spans residues 479-504 (CRHCGTTDTPEWRRGPDGRKSLCNAC).

This is GATA zinc finger domain-containing protein 9 (gtaI) from Dictyostelium discoideum (Social amoeba).